A 445-amino-acid chain; its full sequence is Serine protease inhibitor A3F (445 aa).

4 N-linked (GlcNAc...) asparagine glycosylation sites follow: N28, N94, N174, and N259. The interval 357–382 (GTEAAAGTGYQNLQCCQGVIYSMKIY) is RCL.

It belongs to the serpin family.

The sequence is that of Serine protease inhibitor A3F (Serpina3f) from Mus musculus (Mouse).